The following is a 644-amino-acid chain: Biosynthetic arginine decarboxylase (644 aa).

Position 100 is an N6-(pyridoxal phosphate)lysine (Lys100). Residue 282-292 (CDVGGGLAIDY) coordinates substrate.

It belongs to the Orn/Lys/Arg decarboxylase class-II family. SpeA subfamily. Mg(2+) serves as cofactor. Pyridoxal 5'-phosphate is required as a cofactor.

The enzyme catalyses L-arginine + H(+) = agmatine + CO2. Catalyzes the biosynthesis of agmatine from arginine. This chain is Biosynthetic arginine decarboxylase, found in Gloeobacter violaceus (strain ATCC 29082 / PCC 7421).